Here is a 297-residue protein sequence, read N- to C-terminus: MSYDIIGEIAIIYPPVDDLDKIVNKILKHHKYVKAIYLKTDKLETELRLPKLKLLYGEPILETTYKENKCVFKLRVDKVYFSPRLSTERKEFIDLVKDNEKILIPFAGVNPYPIVIAKHRKVQIKSIELNPWAVKYGIINTKLNKVNVDTILADFGIAWKYIRNLHNKEGIVTKYVNELLKAKPELDLVYTNEEYYDLLNQYYNTKLIEELKPGIEYFDRIIMPLPKGGEHFIFEALVLAKKYIHLYSFAHEKEIEQKVKEIIDIASQLREIKHYDYKIVGDIGVRKYRIRINIYLI.

Residues Arg-89, Phe-106, and 128-129 each bind S-adenosyl-L-methionine; that span reads EL.

This sequence belongs to the class I-like SAM-binding methyltransferase superfamily. TRM5/TYW2 family.

Its subcellular location is the cytoplasm. It carries out the reaction guanosine(37) in tRNA + S-adenosyl-L-methionine = N(1)-methylguanosine(37) in tRNA + S-adenosyl-L-homocysteine + H(+). It catalyses the reaction 4-demethylwyosine(37) in tRNA(Phe) + S-adenosyl-L-methionine = isowyosine(37) in tRNA(Phe) + S-adenosyl-L-homocysteine + H(+). Functionally, catalyzes both the N1-methylation of guanosine and the C7-methylation of 4-demethylwyosine (imG-14) at position 37 in tRNA(Phe). This chain is tRNA (guanine(37)-N(1))/4-demethylwyosine(37)-methyltransferase Taw22, found in Nanoarchaeum equitans (strain Kin4-M).